We begin with the raw amino-acid sequence, 843 residues long: MVSSIIAVAEGKKMELEPNKSLSADMPSLLSRSSEAFNGGTGYRSSSDLSMFSSSLPTLFHEKLNMTDSDSWLSFDESSPNLNKLVIGNSEKDSLEDVEPDALEILLPEDENELLPGLIDELNFTGLPDELDDLEECDVFCTGGGMELDVESQDNHAVDASGMQISDRGAANAFVPRKRPNTAGRVSVEHPNGEHPSRTLFVRNINSSVEDSELSALFEPFGEIRSLYTACKSRGFVMISYYDIRAAHAAMRALQNTLLRKRTLDIHFSIPKENPSEKDMNQGTLVIFNVDTTVSNDELLQLFGAYGEIREIRETPNRRFHRFIEYYDVRDAETALKALNRSEIGGKCIKLELSRPGGARRLSVPSQSQDLERTEVTNFYNQVGSHVANSPPGNWPIGSPVKGSPSHAFTRPHGLGMVRPVNSDNMPGLASILPAHPSSFHGFSPVSNDQGLLNHSNQTILNKGLMHNISYGQPHSLPEHITGGISNSMRFIAPHSSGFGTSSDHRYRWGSPPQHMNYPGYTGVSSSSSSTERPFTVRHGFPFAERQASLLGKYQHHVGSAPSSIHFNTQMNCYTGSPEIPLGFSDMGINRNYNSAHGKANLGVSLPGNSSEQDFTGFGMSSMPTVPFGGSRGLQSVRPEPFAEQGRIHNHESHNQNQFIDGGRYHIDLDRIASGDEIRTTLIIKNIPNKYTYKMLVAEIDEKHKGDYDFLCLPTDFKNKCNMGHAFINMVSPLHIVPFQQTFNGKIWEKFNSGKVASLAYAEIQGKSALASYMQTPSSMKEQKQLFPEVSYHDDGQDANDHEQLFSSIWNITAPDSDWSYTMDLIENPRENGNSKNAAEESS.

2 consecutive RRM domains span residues 198–271 (RTLF…FSIP) and 283–356 (GTLV…LSRP).

In terms of biological role, probable RNA-binding protein that plays a role in meiosis and vegetative growth. In Arabidopsis thaliana (Mouse-ear cress), this protein is Protein MEI2-like 2 (ML2).